An 815-amino-acid polypeptide reads, in one-letter code: Phenylalanine--tRNA ligase beta subunit (815 aa).

The tRNA-binding domain maps to 39 to 148 (SKELQKFEVA…KDAVVGDNFT (110 aa)). The region spanning 421 to 496 (PQKKPLDFSV…RIYGYDKIES (76 aa)) is the B5 domain. The Mg(2+) site is built by D474, D480, E483, and E484. One can recognise an FDX-ACB domain in the interval 721–814 (SDYQANFRDY…ISQKFQGILR (94 aa)).

It belongs to the phenylalanyl-tRNA synthetase beta subunit family. Type 1 subfamily. Tetramer of two alpha and two beta subunits. It depends on Mg(2+) as a cofactor.

It localises to the cytoplasm. The catalysed reaction is tRNA(Phe) + L-phenylalanine + ATP = L-phenylalanyl-tRNA(Phe) + AMP + diphosphate + H(+). The sequence is that of Phenylalanine--tRNA ligase beta subunit (pheT) from Rickettsia prowazekii (strain Madrid E).